The chain runs to 374 residues: UPF0754 membrane protein SA1664 (374 aa).

2 helical membrane passes run 4–24 and 354–374; these read LFII…TNVI and SLGF…AIFV.

This sequence belongs to the UPF0754 family.

It localises to the cell membrane. In Staphylococcus aureus (strain N315), this protein is UPF0754 membrane protein SA1664.